Consider the following 475-residue polypeptide: CAAX prenyl protease 1 homolog (475 aa).

The Lumenal segment spans residues 1-18 (MGMWASLDALWEMPAEKR). Residues 19–39 (IFGAVLLFSWTVYLWETFLAQ) form a helical membrane-spanning segment. The Nuclear portion of the chain corresponds to 40–81 (RQRRIYKTTTHVPPELGQIMDSETFEKSRLYQLDKSTFSFWS). A helical transmembrane segment spans residues 82–102 (GLYSETEGTLILLFGGIPYLW). The Lumenal segment spans residues 103–123 (RLSGRFCGYAGFGPEYEITQS). Residues 124–144 (LVFLLLATLFSALTGLPWSLY) traverse the membrane as a helical segment. The Nuclear segment spans residues 145–170 (NTFVIEEKHGFNQQTLGFFMKDAIKK). A helical transmembrane segment spans residues 171 to 191 (FVVTQCILLPVSSLLLYIIKI). The Lumenal segment spans residues 192–195 (GGDY). Residues 196 to 216 (FFIYAWLFTLVVSLVLVTIYA) traverse the membrane as a helical segment. At 217 to 347 (DYIAPLFDKF…GHWKLGHTVK (131 aa)) the chain is on the nuclear side. His335 provides a ligand contact to Zn(2+). The active site involves Glu336. Zn(2+) is bound at residue His339. Residues 348-368 (NIIISQMNSFLCFFLFAVLIG) form a helical membrane-spanning segment. At 369–382 (RKELFAAFGFYDSQ) the chain is on the lumenal side. A helical transmembrane segment spans residues 383-405 (PTLIGLLIIFQFIFSPYNEVLSF). At 406 to 475 (CLTVLSRRFE…LQALKTMKQH (70 aa)) the chain is on the nuclear side. A Zn(2+)-binding site is contributed by Glu415.

It belongs to the peptidase M48A family. Zn(2+) is required as a cofactor. Widely expressed. High levels in kidney, prostate, testis and ovary.

The protein resides in the endoplasmic reticulum membrane. It is found in the nucleus inner membrane. It localises to the early endosome membrane. Its subcellular location is the late endosome membrane. The catalysed reaction is Hydrolyzes the peptide bond -P2-(S-farnesyl or geranylgeranyl)C-P1'-P2'-P3'-COOH where P1' and P2' are amino acids with aliphatic side chains and P3' is any C-terminal residue.. Transmembrane metalloprotease whose catalytic activity is critical for processing lamin A/LMNA on the inner nuclear membrane and clearing clogged translocons on the endoplasmic reticulum. Proteolytically removes the C-terminal three residues of farnesylated proteins. Also plays an antiviral role independently of its protease activity by restricting enveloped RNA and DNA viruses, including influenza A, Zika, Ebola, Sindbis, vesicular stomatitis, cowpox, and vaccinia. Mechanistically, controls IFITM antiviral pathway to hinder viruses from breaching the endosomal barrier by modulating membrane fluidity. This is CAAX prenyl protease 1 homolog from Homo sapiens (Human).